The following is a 320-amino-acid chain: Cytochrome f (320 aa).

Positions 1-35 are cleaved as a signal peptide; the sequence is MQTRNTFSWIKEQITRSISASLMIYIITRTSISNA. Heme contacts are provided by Y36, C56, C59, and H60. The helical transmembrane segment at 286–306 threads the bilayer; the sequence is VQGLLFFFAAVILAQIFLVLK.

The protein belongs to the cytochrome f family. As to quaternary structure, the 4 large subunits of the cytochrome b6-f complex are cytochrome b6, subunit IV (17 kDa polypeptide, petD), cytochrome f and the Rieske protein, while the 4 small subunits are PetG, PetL, PetM and PetN. The complex functions as a dimer. The cofactor is heme.

The protein localises to the plastid. The protein resides in the chloroplast thylakoid membrane. Its function is as follows. Component of the cytochrome b6-f complex, which mediates electron transfer between photosystem II (PSII) and photosystem I (PSI), cyclic electron flow around PSI, and state transitions. This Helianthus annuus (Common sunflower) protein is Cytochrome f.